Here is a 240-residue protein sequence, read N- to C-terminus: UDP-2,3-diacylglucosamine hydrolase (240 aa).

5 residues coordinate Mn(2+): aspartate 8, histidine 10, aspartate 41, asparagine 79, and histidine 114. 79–80 lines the substrate pocket; sequence NR. Residues aspartate 122, serine 160, asparagine 164, lysine 167, and histidine 195 each contribute to the substrate site. 2 residues coordinate Mn(2+): histidine 195 and histidine 197.

The protein belongs to the LpxH family. Requires Mn(2+) as cofactor.

The protein localises to the cell inner membrane. The catalysed reaction is UDP-2-N,3-O-bis[(3R)-3-hydroxytetradecanoyl]-alpha-D-glucosamine + H2O = 2-N,3-O-bis[(3R)-3-hydroxytetradecanoyl]-alpha-D-glucosaminyl 1-phosphate + UMP + 2 H(+). The protein operates within glycolipid biosynthesis; lipid IV(A) biosynthesis; lipid IV(A) from (3R)-3-hydroxytetradecanoyl-[acyl-carrier-protein] and UDP-N-acetyl-alpha-D-glucosamine: step 4/6. Hydrolyzes the pyrophosphate bond of UDP-2,3-diacylglucosamine to yield 2,3-diacylglucosamine 1-phosphate (lipid X) and UMP by catalyzing the attack of water at the alpha-P atom. Involved in the biosynthesis of lipid A, a phosphorylated glycolipid that anchors the lipopolysaccharide to the outer membrane of the cell. The chain is UDP-2,3-diacylglucosamine hydrolase from Salmonella newport (strain SL254).